The sequence spans 247 residues: Uridylate kinase (247 aa).

ATP is bound at residue Lys16–Gly19. Residue Gly58 participates in UMP binding. Gly59 and Arg63 together coordinate ATP. Residues Asp78 and Thr139–Thr146 contribute to the UMP site. Residues Thr166, Tyr172, and Asp175 each coordinate ATP.

Belongs to the UMP kinase family. As to quaternary structure, homohexamer.

The protein resides in the cytoplasm. It catalyses the reaction UMP + ATP = UDP + ADP. It participates in pyrimidine metabolism; CTP biosynthesis via de novo pathway; UDP from UMP (UMPK route): step 1/1. Inhibited by UTP. Its function is as follows. Catalyzes the reversible phosphorylation of UMP to UDP. The chain is Uridylate kinase from Xylella fastidiosa (strain Temecula1 / ATCC 700964).